Reading from the N-terminus, the 321-residue chain is Ribose-phosphate pyrophosphokinase 2 (321 aa).

Mg(2+) contacts are provided by Asp-130, His-132, and Asp-145. Residue Ser-172 is modified to Phosphoserine.

Belongs to the ribose-phosphate pyrophosphokinase family.

Its subcellular location is the cytoplasm. It carries out the reaction D-ribose 5-phosphate + ATP = 5-phospho-alpha-D-ribose 1-diphosphate + AMP + H(+). Its pathway is metabolic intermediate biosynthesis; 5-phospho-alpha-D-ribose 1-diphosphate biosynthesis; 5-phospho-alpha-D-ribose 1-diphosphate from D-ribose 5-phosphate (route I): step 1/1. In terms of biological role, 5-phosphoribose 1-diphosphate synthase involved in nucleotide, histidine, and tryptophan biosynthesis. Active in heteromultimeric complexes with other 5-phosphoribose 1-diphosphate synthases. The chain is Ribose-phosphate pyrophosphokinase 2 from Schizosaccharomyces pombe (strain 972 / ATCC 24843) (Fission yeast).